Consider the following 702-residue polypeptide: Transposon Tn7 transposition protein TnsB (702 aa).

A DNA-binding domain 1 (DBD1) region spans residues Met-1–Asp-139. Residues Val-105–Arg-124 constitute a DNA-binding region (H-T-H motif). The disordered stretch occupies residues Ile-137–Arg-160. The linker 1 stretch occupies residues Tyr-140–Val-172. A DNA-binding domain 2 (DBD2) region spans residues Thr-173–Tyr-233. The segment at Pro-234–Gly-267 is linker 2. The Integrase catalytic domain occupies Gln-262–Met-480. The interval Ser-268 to Phe-582 is catalytic domain (CD). The tract at residues Gln-589–Ser-702 is C-terminal domain. A disordered region spans residues Lys-623–Ser-702.

In terms of assembly, heteromer with TnsA.

Sequence-specific, DNA-binding protein required for Tn7 transposition. Recognizes sequences necessary for recombination at both left and right ends of Tn7 and, together with TnsA, forms the transposase. TnsB executes the 3'-DNA strand breakage and joining reactions. TnsB binding introduces DNA bending. There are 3 DNA-binding sites in the left and 4 in the right end of Tn7; as TnsB levels increase more TnsB is bound, suggesting high protein levels contribute to transposon immunity. Binding of TnsB to the transposon right end represses expression of the downstream transposition genes. TnsABC + TnsD promote high-frequency insertion of Tn7 into a specific target site known as att-Tn7 whereas TnsABC + TnsE promote low-frequency insertion into many different sites. The chain is Transposon Tn7 transposition protein TnsB from Escherichia coli.